A 92-amino-acid chain; its full sequence is DNA-directed RNA polymerase subunit Rpo11 (92 aa).

This sequence belongs to the archaeal Rpo11/eukaryotic RPB11/RPC19 RNA polymerase subunit family. Part of the RNA polymerase complex.

The protein localises to the cytoplasm. It catalyses the reaction RNA(n) + a ribonucleoside 5'-triphosphate = RNA(n+1) + diphosphate. Its function is as follows. DNA-dependent RNA polymerase (RNAP) catalyzes the transcription of DNA into RNA using the four ribonucleoside triphosphates as substrates. In Saccharolobus islandicus (strain Y.N.15.51 / Yellowstone #2) (Sulfolobus islandicus), this protein is DNA-directed RNA polymerase subunit Rpo11.